Here is a 454-residue protein sequence, read N- to C-terminus: DNA-binding protein (454 aa).

Residues 1-41 (MSHKKVVAISESSSDEEVPVAPPTAPPKKRQRKAVEEPRGH) form a disordered region. At Tyr-129 the chain carries Phosphotyrosine; by host. Zn(2+)-binding residues include Cys-213 and His-215. Residues 226–260 (VEMDVNSENAQRALKENPEKTKIVSNRWGRNVVQF) form a flexible loop region. Zn(2+) is bound by residues Cys-268, Cys-284, Cys-325, Cys-327, Cys-378, and Cys-394. Residues 440–454 (TILPQGQHDDDLVLF) form a C-terminal arm, DBP binding region.

The protein belongs to the adenoviridae E2A DNA-binding protein family. In terms of assembly, homomultimerizes on viral ssDNA bound to pTP. Forms a initiation complex with viral polymerase, pTP and hosts NFIA and POU2F1/OCT1. Interacts with host SRCAP.

The protein localises to the host nucleus. Its function is as follows. Plays a role in the elongation phase of viral strand displacement replication by unwinding the template in an ATP-independent fashion, employing its capacity to form multimers. Also enhances the rate of initiation. Released from template upon second strand synthesis. Assembles in complex with viral pTP, viral pol, host NFIA and host POU2F1/OCT1 on viral origin of replication. Covers the whole ssDNA genome during synthesis. The complementary strand synthesis induces its relese from DNA template. May inhibit cellular transcription mediated by the interaction between host SRCAP and CBP. The sequence is that of DNA-binding protein from Canine adenovirus serotype 1 (strain RI261) (CAdV-1).